We begin with the raw amino-acid sequence, 371 residues long: 4-hydroxy-3-methylbut-2-en-1-yl diphosphate synthase (flavodoxin) (371 aa).

Residues cysteine 270, cysteine 273, cysteine 305, and glutamate 312 each contribute to the [4Fe-4S] cluster site.

The protein belongs to the IspG family. [4Fe-4S] cluster serves as cofactor.

It catalyses the reaction (2E)-4-hydroxy-3-methylbut-2-enyl diphosphate + oxidized [flavodoxin] + H2O + 2 H(+) = 2-C-methyl-D-erythritol 2,4-cyclic diphosphate + reduced [flavodoxin]. It functions in the pathway isoprenoid biosynthesis; isopentenyl diphosphate biosynthesis via DXP pathway; isopentenyl diphosphate from 1-deoxy-D-xylulose 5-phosphate: step 5/6. Converts 2C-methyl-D-erythritol 2,4-cyclodiphosphate (ME-2,4cPP) into 1-hydroxy-2-methyl-2-(E)-butenyl 4-diphosphate. This is 4-hydroxy-3-methylbut-2-en-1-yl diphosphate synthase (flavodoxin) from Shewanella halifaxensis (strain HAW-EB4).